The primary structure comprises 95 residues: Small ribosomal subunit protein bS16 (95 aa).

This sequence belongs to the bacterial ribosomal protein bS16 family.

The chain is Small ribosomal subunit protein bS16 from Thermosipho melanesiensis (strain DSM 12029 / CIP 104789 / BI429).